The primary structure comprises 272 residues: NADH-dependent L-xylulose reductase (272 aa).

NADP(+) contacts are provided by L24 and D78. S160 functions as the Proton donor in the catalytic mechanism. Positions 175, 179, and 208 each coordinate NADP(+). Y175 (proton acceptor) is an active-site residue. K179 acts as the Lowers pKa of active site Tyr in catalysis.

The protein belongs to the short-chain dehydrogenases/reductases (SDR) family.

It carries out the reaction xylitol + NAD(+) = L-xylulose + NADH + H(+). The enzyme catalyses D-arabinitol + NAD(+) = D-ribulose + NADH + H(+). In terms of biological role, NADH-dependent L-xylulose reductase; part of the yeast pathway for L-arabinose catabolism. Reversibly converts L-xylulose to xylitol and D-ribulose to D-arabinitol. It has a much lower activity with D-xylulose. Sugar alcohols can serve as a substrate when the hydroxyl group of C-2 is in the L- and the hydroxyl group of the C-3 is in the D-configuration. Also seems to be specific for sugar alcohols that have not more than 5 carbons since no activity is observed with dulcitol (galactitol), which has the hydroxyl group of C-2 in L- and of C-3 in D-configuration, but is a six-carbon sugar alcohol. The chain is NADH-dependent L-xylulose reductase from Ambrosiozyma monospora (Yeast).